The primary structure comprises 360 residues: MEPTSSAAMARQTWELENNIPAAASDPDALDAIYRYDEAAQARVQQEKPWANDPHPFRRAKISALALLKMVVHARAGGTIEVMGLMQGKCEGDAIVVMDAFALPVEGTETRVNAQADAYEYMVEYSTINKQAGRLENVVGWYHSHPGYGCWLSGIDVSTQMLNQQFQEPFLAVVIDPTRTVSAGKVEIGAFRTYPKDYKPPDEPVSEYQTIPLNKIEDFGVHCKQYYALDITYFKSSLDSHLLDLLWNKYWVNTLSSSPLLGNRDYVAGQIFDLADKLEQAEGQLAHSRYGMLMPSQRKKEQEESPLAKVTRDSSKITAEQVHGLMSQVIKDILFNSVHPSNKASTSAPDSSGPEPMVEA.

In terms of domain architecture, MPN spans 60-197 (AKISALALLK…IGAFRTYPKD (138 aa)). Zn(2+) is bound by residues histidine 143, histidine 145, and aspartate 156. The short motif at 143–156 (HSHPGYGCWLSGID) is the JAMM motif element. Disordered stretches follow at residues 293–315 (LMPS…RDSS) and 341–360 (SNKA…MVEA). Positions 341 to 350 (SNKASTSAPD) are enriched in polar residues.

Belongs to the peptidase M67A family. CSN5 subfamily. In terms of assembly, component of the CSN complex, probably composed of CSN1, CSN2, CSN3, CSN4, CSN5, CSN6, CSN7 and CSN8. Interacts with MCM2.

In terms of biological role, probable protease subunit of the COP9 signalosome complex (CSN), a complex involved in various cellular and developmental processes such as photomorphogenesis and response to hormones. The CSN complex is an essential regulator of the ubiquitin (Ubl) conjugation pathway by mediating the deneddylation of the cullin subunits of SCF-type E3 ligase complexes, leading to decrease the Ubl ligase activity of SCF. Involved in early response to iron deficiency. This chain is COP9 signalosome complex subunit 5, found in Oryza sativa subsp. japonica (Rice).